The sequence spans 200 residues: MARYTGPMWKISRRLGISLSGTGKELQKRPYPPGQHGPGQRRKLSEYGLQLQEKQKLRHMYGVNERQFRKTFEEAGKMPGKHGENFMILLESRLDNLVYRLGLARTRRQARQLVTHGHIIVDGSRVNIPSYRVKPGQTIAVREKSRNLQVIKEALEANNYIPDYLSFDPEKMEGTYTRLPERSELPAEINEALIVEFYSR.

The disordered stretch occupies residues 22–42; sequence TGKELQKRPYPPGQHGPGQRR. The S4 RNA-binding domain occupies 92–152; it reads SRLDNLVYRL…EKSRNLQVIK (61 aa).

This sequence belongs to the universal ribosomal protein uS4 family. Part of the 30S ribosomal subunit. Contacts protein S5. The interaction surface between S4 and S5 is involved in control of translational fidelity.

In terms of biological role, one of the primary rRNA binding proteins, it binds directly to 16S rRNA where it nucleates assembly of the body of the 30S subunit. With S5 and S12 plays an important role in translational accuracy. The polypeptide is Small ribosomal subunit protein uS4 (rpsD) (Geobacillus stearothermophilus (Bacillus stearothermophilus)).